Here is a 482-residue protein sequence, read N- to C-terminus: tRNA sulfurtransferase (482 aa).

The THUMP domain maps to 61 to 165 (KETLEVLTQT…NDKLNQVIER (105 aa)). ATP-binding positions include 183–184 (LI), K265, G287, and Q296. C344 and C456 are joined by a disulfide. The region spanning 404 to 482 (VAEHAVVLDI…GFHNVKVYRP (79 aa)) is the Rhodanese domain. The Cysteine persulfide intermediate role is filled by C456.

This sequence belongs to the ThiI family.

It localises to the cytoplasm. The catalysed reaction is [ThiI sulfur-carrier protein]-S-sulfanyl-L-cysteine + a uridine in tRNA + 2 reduced [2Fe-2S]-[ferredoxin] + ATP + H(+) = [ThiI sulfur-carrier protein]-L-cysteine + a 4-thiouridine in tRNA + 2 oxidized [2Fe-2S]-[ferredoxin] + AMP + diphosphate. It catalyses the reaction [ThiS sulfur-carrier protein]-C-terminal Gly-Gly-AMP + S-sulfanyl-L-cysteinyl-[cysteine desulfurase] + AH2 = [ThiS sulfur-carrier protein]-C-terminal-Gly-aminoethanethioate + L-cysteinyl-[cysteine desulfurase] + A + AMP + 2 H(+). It participates in cofactor biosynthesis; thiamine diphosphate biosynthesis. Catalyzes the ATP-dependent transfer of a sulfur to tRNA to produce 4-thiouridine in position 8 of tRNAs, which functions as a near-UV photosensor. Also catalyzes the transfer of sulfur to the sulfur carrier protein ThiS, forming ThiS-thiocarboxylate. This is a step in the synthesis of thiazole, in the thiamine biosynthesis pathway. The sulfur is donated as persulfide by IscS. This chain is tRNA sulfurtransferase, found in Vibrio atlanticus (strain LGP32) (Vibrio splendidus (strain Mel32)).